The sequence spans 142 residues: Hemoglobin subunit alpha (142 aa).

Residues Val-2 to Arg-142 form the Globin domain. Ser-4 carries the post-translational modification Phosphoserine. An N6-succinyllysine mark is found at Lys-8 and Lys-12. Lys-17 is subject to N6-acetyllysine; alternate. N6-succinyllysine; alternate is present on Lys-17. Tyr-25 carries the phosphotyrosine modification. Ser-36 is modified (phosphoserine). Position 41 is an N6-succinyllysine (Lys-41). At Ser-50 the chain carries Phosphoserine. His-59 contacts O2. His-88 contributes to the heme b binding site. Ser-103 is modified (phosphoserine). Phosphothreonine is present on Thr-109. A Phosphoserine modification is found at Ser-125. Thr-135 and Thr-138 each carry phosphothreonine. Ser-139 carries the phosphoserine modification.

Belongs to the globin family. In terms of assembly, heterotetramer of two alpha chains and two beta chains. Red blood cells.

Functionally, involved in oxygen transport from the lung to the various peripheral tissues. In terms of biological role, hemopressin acts as an antagonist peptide of the cannabinoid receptor CNR1. Hemopressin-binding efficiently blocks cannabinoid receptor CNR1 and subsequent signaling. The sequence is that of Hemoglobin subunit alpha (HBA) from Bos taurus (Bovine).